The sequence spans 461 residues: Phosphoglucosamine mutase (461 aa).

S107 functions as the Phosphoserine intermediate in the catalytic mechanism. Residues S107, D254, D256, and D258 each contribute to the Mg(2+) site. S107 carries the post-translational modification Phosphoserine.

Belongs to the phosphohexose mutase family. It depends on Mg(2+) as a cofactor. Activated by phosphorylation.

It catalyses the reaction alpha-D-glucosamine 1-phosphate = D-glucosamine 6-phosphate. Catalyzes the conversion of glucosamine-6-phosphate to glucosamine-1-phosphate. In Bifidobacterium longum subsp. infantis (strain ATCC 15697 / DSM 20088 / JCM 1222 / NCTC 11817 / S12), this protein is Phosphoglucosamine mutase.